The primary structure comprises 635 residues: Threonine--tRNA ligase (635 aa).

A TGS domain is found at 1–58; sequence MIRVICDNETFELPTGSTAADFASKIKNSHYFAGVVINDQIKDLSTTLSEGDVLKFVT. A catalytic region spans residues 237-528; sequence DHRVLGTKLD…LIEHFKGRFP (292 aa). Zn(2+)-binding residues include Cys328, His379, and His505.

Belongs to the class-II aminoacyl-tRNA synthetase family. In terms of assembly, homodimer. It depends on Zn(2+) as a cofactor.

The protein localises to the cytoplasm. It catalyses the reaction tRNA(Thr) + L-threonine + ATP = L-threonyl-tRNA(Thr) + AMP + diphosphate + H(+). In terms of biological role, catalyzes the attachment of threonine to tRNA(Thr) in a two-step reaction: L-threonine is first activated by ATP to form Thr-AMP and then transferred to the acceptor end of tRNA(Thr). Also edits incorrectly charged L-seryl-tRNA(Thr). The chain is Threonine--tRNA ligase from Chlamydia felis (strain Fe/C-56) (Chlamydophila felis).